The following is a 1154-amino-acid chain: PAN2-PAN3 deadenylation complex catalytic subunit pan2 (1154 aa).

WD repeat units follow at residues glycine 20–serine 59, threonine 102–arginine 145, and alanine 276–glutamate 315. The interval methionine 316–aspartate 451 is linker. The region spanning aspartate 452 to arginine 821 is the USP domain. The 179-residue stretch at valine 870–leucine 1048 folds into the Exonuclease domain. A divalent metal cation-binding residues include aspartate 873, glutamate 875, aspartate 982, and aspartate 1041. The disordered stretch occupies residues proline 1092 to lysine 1154. 2 stretches are compositionally biased toward polar residues: residues valine 1096–threonine 1109 and leucine 1132–glycine 1141.

Belongs to the peptidase C19 family. PAN2 subfamily. Forms a heterotrimer with an asymmetric homodimer of the regulatory subunit pan3 to form the poly(A)-nuclease (PAN) deadenylation complex. A divalent metal cation is required as a cofactor.

It is found in the cytoplasm. The catalysed reaction is Exonucleolytic cleavage of poly(A) to 5'-AMP.. Positively regulated by the regulatory subunit pan3. Its function is as follows. Catalytic subunit of the poly(A)-nuclease (PAN) deadenylation complex, one of two cytoplasmic mRNA deadenylases involved in mRNA turnover. PAN specifically shortens poly(A) tails of RNA and the activity is stimulated by poly(A)-binding protein pab1. PAN deadenylation is followed by rapid degradation of the shortened mRNA tails by the CCR4-NOT complex. Deadenylated mRNAs are then degraded by two alternative mechanisms, namely exosome-mediated 3'-5' exonucleolytic degradation, or deadenylation-dependent mRNA decaping and subsequent 5'-3' exonucleolytic degradation by xrn1. May also be involved in post-transcriptional maturation of mRNA poly(A) tails. The protein is PAN2-PAN3 deadenylation complex catalytic subunit pan2 of Emericella nidulans (strain FGSC A4 / ATCC 38163 / CBS 112.46 / NRRL 194 / M139) (Aspergillus nidulans).